The chain runs to 237 residues: Ribosomal RNA small subunit methyltransferase G (237 aa).

Residues Gly-78, Phe-83, 129–130 (AE), and Arg-148 contribute to the S-adenosyl-L-methionine site. The interval 216–237 (SKKKETPNKYPRKAGTPNKKPL) is disordered.

The protein belongs to the methyltransferase superfamily. RNA methyltransferase RsmG family.

It is found in the cytoplasm. In terms of biological role, specifically methylates the N7 position of a guanine in 16S rRNA. This chain is Ribosomal RNA small subunit methyltransferase G, found in Streptococcus agalactiae serotype III (strain NEM316).